A 277-amino-acid chain; its full sequence is NH(3)-dependent NAD(+) synthetase (277 aa).

47-54 (GISGGQDS) lines the ATP pocket. Asp-53 contributes to the Mg(2+) binding site. Residue Arg-141 coordinates deamido-NAD(+). ATP is bound at residue Thr-161. Glu-166 serves as a coordination point for Mg(2+). Lys-174 and Asp-181 together coordinate deamido-NAD(+). ATP-binding residues include Lys-190 and Thr-212. 261-262 (HK) contributes to the deamido-NAD(+) binding site.

The protein belongs to the NAD synthetase family. As to quaternary structure, homodimer.

The catalysed reaction is deamido-NAD(+) + NH4(+) + ATP = AMP + diphosphate + NAD(+) + H(+). Its pathway is cofactor biosynthesis; NAD(+) biosynthesis; NAD(+) from deamido-NAD(+) (ammonia route): step 1/1. Functionally, catalyzes the ATP-dependent amidation of deamido-NAD to form NAD. Uses ammonia as a nitrogen source. The chain is NH(3)-dependent NAD(+) synthetase from Lactobacillus johnsonii (strain CNCM I-12250 / La1 / NCC 533).